The chain runs to 105 residues: MKRVRRTRSFVVDALCDEVDLSRRHVARVVDSFVSVVTAALERGETVELRDFGVFESRVRKASVGKSIKTGEVVSIPSHCVVVFRPSKRLKSAVRGYRSGEVGAD.

This sequence belongs to the bacterial histone-like protein family.

Histone-like DNA-binding protein which is capable of wrapping DNA to stabilize it, and thus to prevent its denaturation under extreme environmental conditions. This chain is DNA-binding protein HU (hup), found in Treponema pallidum (strain Nichols).